The chain runs to 680 residues: DNA-directed RNA polymerase subunit beta' (680 aa).

C69, C71, C87, and C90 together coordinate Zn(2+). D489, D491, and D493 together coordinate Mg(2+).

Belongs to the RNA polymerase beta' chain family. RpoC1 subfamily. In terms of assembly, in plastids the minimal PEP RNA polymerase catalytic core is composed of four subunits: alpha, beta, beta', and beta''. When a (nuclear-encoded) sigma factor is associated with the core the holoenzyme is formed, which can initiate transcription. Requires Mg(2+) as cofactor. It depends on Zn(2+) as a cofactor.

Its subcellular location is the plastid. The protein resides in the chloroplast. It catalyses the reaction RNA(n) + a ribonucleoside 5'-triphosphate = RNA(n+1) + diphosphate. Its function is as follows. DNA-dependent RNA polymerase catalyzes the transcription of DNA into RNA using the four ribonucleoside triphosphates as substrates. The chain is DNA-directed RNA polymerase subunit beta' from Aethionema grandiflorum (Persian stone-cress).